Consider the following 222-residue polypeptide: Ribonuclease S-3 (222 aa).

The N-terminal stretch at 1-22 (MVHVVMMVFLLIVLILCSSTVG) is a signal peptide. Q31 serves as a coordination point for RNA. The cysteines at positions 37 and 44 are disulfide-linked. The N-linked (GlcNAc...) asparagine glycan is linked to N40. RNA is bound by residues H55, 92-93 (NV), F102, 105-106 (KE), and 109-110 (KH). The Proton donor role is filled by H55. C70 and C113 form a disulfide bridge. Residues E106 and K109 contribute to the active site. The active-site Proton acceptor is the H110. A glycan (N-linked (GlcNAc...) asparagine) is linked at N138. 2 disulfides stabilise this stretch: C177–C215 and C192–C203.

This sequence belongs to the RNase T2 family. In terms of processing, N-linked core structure at Asn-138 contains xylose.

The catalysed reaction is a ribonucleotidyl-ribonucleotide-RNA + H2O = a 3'-end 3'-phospho-ribonucleotide-RNA + a 5'-end dephospho-ribonucleoside-RNA + H(+). Its function is as follows. Self-incompatibility (SI) is the inherited ability of a flowering plant to prevent self-fertilization by discriminating between self and non-self pollen during pollination. In many species, self-incompatibility is controlled by the single, multiallelic locus S. The sequence is that of Ribonuclease S-3 from Pyrus pyrifolia (Chinese pear).